The primary structure comprises 1960 residues: Exophilin-5 (1960 aa).

The RabBD domain occupies glycine 7 to isoleucine 63. Polar residues-rich tracts occupy residues alanine 325–alanine 334, aspartate 342–isoleucine 366, and serine 635–alanine 645. Disordered stretches follow at residues alanine 325–isoleucine 366, threonine 616–alanine 645, histidine 672–proline 720, aspartate 734–threonine 835, and phenylalanine 910–valine 976. The span at serine 673 to threonine 682 shows a compositional bias: low complexity. Over residues asparagine 692–leucine 707 the composition is skewed to basic and acidic residues. Phosphoserine is present on residues serine 799 and serine 802. Polar residues-rich tracts occupy residues glutamate 808–threonine 835 and phenylalanine 910–glycine 920. The segment covering glutamine 921–lysine 932 has biased composition (basic and acidic residues). Polar residues predominate over residues serine 933 to asparagine 945. Residue serine 1027 is modified to Phosphoserine. Residues glutamine 1035–methionine 1095 form a disordered region. Residues glycine 1062–serine 1074 are compositionally biased toward polar residues. 2 positions are modified to phosphoserine: serine 1083 and serine 1117. Disordered stretches follow at residues alanine 1291–glutamate 1375, proline 1389–serine 1493, and glutamate 1510–leucine 1759. Over residues proline 1318 to leucine 1336 the composition is skewed to basic and acidic residues. Residues lysine 1356–lysine 1365 show a composition bias toward polar residues. A compositionally biased stretch (basic and acidic residues) spans histidine 1392 to lysine 1403. 2 stretches are compositionally biased toward polar residues: residues arginine 1470 to serine 1493 and serine 1520 to alanine 1533. At serine 1493 the chain carries Phosphoserine. 2 stretches are compositionally biased toward basic and acidic residues: residues glutamate 1534–threonine 1546 and threonine 1561–serine 1571. Positions glycine 1572 to isoleucine 1586 are enriched in basic residues. Residues glutamate 1637–serine 1657 show a composition bias toward polar residues. Phosphoserine is present on residues serine 1724, serine 1739, serine 1789, and serine 1819. A compositionally biased stretch (polar residues) spans threonine 1732 to cysteine 1741. 2 disordered regions span residues glutamate 1828–serine 1847 and valine 1906–leucine 1960. Residues tryptophan 1939 to tyrosine 1950 show a composition bias toward acidic residues. Residues leucine 1951–leucine 1960 are compositionally biased toward basic and acidic residues.

In terms of assembly, interacts with RAB27A.

May act as Rab effector protein and play a role in vesicle trafficking. This is Exophilin-5 from Mus musculus (Mouse).